The chain runs to 128 residues: uncharacterized protein (128 aa).

This is an uncharacterized protein from Caenorhabditis elegans.